A 310-amino-acid chain; its full sequence is Lipoyl synthase (310 aa).

Residues C51, C56, C62, C77, C81, C84, and S290 each coordinate [4Fe-4S] cluster. A Radical SAM core domain is found at 63–280 (WSRKTATYLA…RRVGESLGLF (218 aa)).

Belongs to the radical SAM superfamily. Lipoyl synthase family. The cofactor is [4Fe-4S] cluster.

It is found in the cytoplasm. It carries out the reaction [[Fe-S] cluster scaffold protein carrying a second [4Fe-4S](2+) cluster] + N(6)-octanoyl-L-lysyl-[protein] + 2 oxidized [2Fe-2S]-[ferredoxin] + 2 S-adenosyl-L-methionine + 4 H(+) = [[Fe-S] cluster scaffold protein] + N(6)-[(R)-dihydrolipoyl]-L-lysyl-[protein] + 4 Fe(3+) + 2 hydrogen sulfide + 2 5'-deoxyadenosine + 2 L-methionine + 2 reduced [2Fe-2S]-[ferredoxin]. The protein operates within protein modification; protein lipoylation via endogenous pathway; protein N(6)-(lipoyl)lysine from octanoyl-[acyl-carrier-protein]: step 2/2. Functionally, catalyzes the radical-mediated insertion of two sulfur atoms into the C-6 and C-8 positions of the octanoyl moiety bound to the lipoyl domains of lipoate-dependent enzymes, thereby converting the octanoylated domains into lipoylated derivatives. The sequence is that of Lipoyl synthase from Chlamydia abortus (strain DSM 27085 / S26/3) (Chlamydophila abortus).